The following is an 85-amino-acid chain: Large ribosomal subunit protein bL27 (85 aa).

Residues 1–21 (MAHKKGVGSSRNGRDSDGQRL) form a disordered region.

Belongs to the bacterial ribosomal protein bL27 family.

The sequence is that of Large ribosomal subunit protein bL27 from Geobacter sp. (strain M21).